The sequence spans 225 residues: Urease accessory protein UreG (225 aa).

25-32 (GPVGAGKT) is a GTP binding site.

This sequence belongs to the SIMIBI class G3E GTPase family. UreG subfamily. In terms of assembly, homodimer. UreD, UreF and UreG form a complex that acts as a GTP-hydrolysis-dependent molecular chaperone, activating the urease apoprotein by helping to assemble the nickel containing metallocenter of UreC. The UreE protein probably delivers the nickel.

The protein resides in the cytoplasm. Functionally, facilitates the functional incorporation of the urease nickel metallocenter. This process requires GTP hydrolysis, probably effectuated by UreG. The protein is Urease accessory protein UreG of Haemophilus influenzae (strain 86-028NP).